The chain runs to 232 residues: Secreted LysM effector Mg3LysM (232 aa).

The signal sequence occupies residues 1–16 (MQNIFLAATLLGAAFA). The LysM 1 domain occupies 47-91 (TNYTVKAGDTLGAIAKQYNSGVCDIAKVNGIDNPDYIKPDQVLSI). 6 N-linked (GlcNAc...) asparagine glycosylation sites follow: N48, N100, N138, N195, N209, and N227. 2 LysM domains span residues 120–165 (STYT…VINT) and 177–221 (GTYV…IIIL).

It belongs to the secreted LysM effector family.

Functionally, secreted effector that enables the plant pathogenic fungus to manipulate host defenses for successful infection. Binds chitin fragments and blocks the activation of chitin-induced plant defense responses. Protects fungal hyphae against hydrolytic plant enzymes. The sequence is that of Secreted LysM effector Mg3LysM from Zymoseptoria tritici (strain CBS 115943 / IPO323) (Speckled leaf blotch fungus).